Here is a 933-residue protein sequence, read N- to C-terminus: Collagen alpha-2(I) chain (933 aa).

A compositionally biased stretch (gly residues) spans 1–16 (SGGFDFGVGLGPGPMG). 2 disordered regions span residues 1 to 191 (SGGF…LTGA) and 206 to 933 (LPGP…AGVR). Residues 17-53 (LMGPRGPPGASGAPGPQGFQGPAGEPGEPGQTGPAGA) show a composition bias toward low complexity. 4-hydroxyproline occurs at positions 24 and 30. The span at 57-72 (KAGEDGHPGKPGRPGE) shows a compositional bias: basic and acidic residues. Lys-94 carries the post-translational modification 5-hydroxylysine; alternate. Lys-94 carries an O-linked (Gal...) hydroxylysine; alternate glycan. Low complexity-rich tracts occupy residues 108 to 137 (VGAP…SAGP), 162 to 176 (AGPR…VSGP), and 213 to 228 (PGPV…RGLV). Residues 280 to 289 (GLRGGPGSRG) are compositionally biased toward gly residues. A 4-hydroxyproline mark is found at Pro-317 and Pro-320. Residues 413–422 (GVQGGKGEQG) show a composition bias toward gly residues. 2 stretches are compositionally biased toward low complexity: residues 468-485 (PGES…SRGP) and 497-507 (EPGVVGAPGTA). Residues 508 to 517 (GPAGSGGLPG) show a composition bias toward gly residues. 3 stretches are compositionally biased toward low complexity: residues 540–584 (VGTT…PRGS), 591–611 (VGPA…QPGA), and 627–640 (PTGP…SGPN). A compositionally biased stretch (gly residues) spans 644–656 (GPAGGRGDGGPPG). The segment covering 657-667 (LTGFPGAAGRT) has biased composition (low complexity). Positions 704–713 (GETGAGGPPG) are enriched in gly residues. 2 stretches are compositionally biased toward low complexity: residues 721-748 (SGEP…LGLP) and 756-781 (LPGV…RGPS). Residues 795 to 807 (AGRDGLPGHKGER) are compositionally biased toward basic and acidic residues. 2 stretches are compositionally biased toward low complexity: residues 809-831 (YAGN…VGPA) and 840-860 (PGPA…PSGP). The span at 864 to 874 (RGDKGEGDKGP) shows a compositional bias: basic and acidic residues.

It belongs to the fibrillar collagen family. Trimers of one alpha 2(I) and two alpha 1(I) chains. Interacts (via C-terminus) with TMEM131 (via PapD-L domain); the interaction is direct and is involved in assembly and TRAPPIII ER-to-Golgi transport complex-dependent secretion of collagen. Prolines at the third position of the tripeptide repeating unit (G-X-Y) are hydroxylated in some or all of the chains. Expressed in bones.

It localises to the secreted. Its subcellular location is the extracellular space. It is found in the extracellular matrix. Type I collagen is a member of group I collagen (fibrillar forming collagen). This Glyptodon sp. (strain SLP-2019) (Giant armadillo) protein is Collagen alpha-2(I) chain.